Consider the following 227-residue polypeptide: uncharacterized protein (227 aa).

Position 17–24 (17–24) interacts with ATP; that stretch reads GKTGCGKT.

This is an uncharacterized protein from Methanocaldococcus jannaschii (strain ATCC 43067 / DSM 2661 / JAL-1 / JCM 10045 / NBRC 100440) (Methanococcus jannaschii).